Consider the following 274-residue polypeptide: Formamidopyrimidine-DNA glycosylase (274 aa).

Pro-2 acts as the Schiff-base intermediate with DNA in catalysis. Catalysis depends on Glu-3, which acts as the Proton donor. The Proton donor; for beta-elimination activity role is filled by Lys-59. DNA-binding residues include His-93, Arg-112, and Arg-155. The segment at 240-274 adopts an FPG-type zinc-finger fold; sequence QVYGRTGRPCPRCGQPLERVRLGGRSTHFCPRCQV. Catalysis depends on Arg-264, which acts as the Proton donor; for delta-elimination activity.

The protein belongs to the FPG family. In terms of assembly, monomer. Zn(2+) is required as a cofactor.

The enzyme catalyses Hydrolysis of DNA containing ring-opened 7-methylguanine residues, releasing 2,6-diamino-4-hydroxy-5-(N-methyl)formamidopyrimidine.. The catalysed reaction is 2'-deoxyribonucleotide-(2'-deoxyribose 5'-phosphate)-2'-deoxyribonucleotide-DNA = a 3'-end 2'-deoxyribonucleotide-(2,3-dehydro-2,3-deoxyribose 5'-phosphate)-DNA + a 5'-end 5'-phospho-2'-deoxyribonucleoside-DNA + H(+). In terms of biological role, involved in base excision repair of DNA damaged by oxidation or by mutagenic agents. Acts as a DNA glycosylase that recognizes and removes damaged bases. Has a preference for oxidized purines, such as 7,8-dihydro-8-oxoguanine (8-oxoG). Has AP (apurinic/apyrimidinic) lyase activity and introduces nicks in the DNA strand. Cleaves the DNA backbone by beta-delta elimination to generate a single-strand break at the site of the removed base with both 3'- and 5'-phosphates. This chain is Formamidopyrimidine-DNA glycosylase, found in Moorella thermoacetica (strain ATCC 39073 / JCM 9320).